The sequence spans 710 residues: Assimilatory nitrate reductase catalytic subunit (710 aa).

The region spanning 19–77 is the 4Fe-4S Mo/W bis-MGD-type domain; the sequence is EKTYDTQCPFCSMQCKMQLVEQTIVTRKKYTAIGIDNPTTQGRLCIKGMNAHQHALNSS. 4 residues coordinate [4Fe-4S] cluster: Cys-26, Cys-29, Cys-33, and Cys-63.

It belongs to the prokaryotic molybdopterin-containing oxidoreductase family. [4Fe-4S] cluster serves as cofactor. Requires Mo-bis(molybdopterin guanine dinucleotide) as cofactor.

The protein operates within nitrogen metabolism; nitrate reduction (denitrification); dinitrogen from nitrate: step 1/4. Functionally, nitrate reductase is a key enzyme involved in the first step of nitrate assimilation in plants, fungi and bacteria. This is Assimilatory nitrate reductase catalytic subunit (nasC) from Bacillus subtilis (strain 168).